The sequence spans 139 residues: D-ribose pyranase (139 aa).

His-20 (proton donor) is an active-site residue. Substrate is bound by residues Asp-28, His-106, and 128-130 (YAN).

Belongs to the RbsD / FucU family. RbsD subfamily. As to quaternary structure, homodecamer.

The protein localises to the cytoplasm. The catalysed reaction is beta-D-ribopyranose = beta-D-ribofuranose. The protein operates within carbohydrate metabolism; D-ribose degradation; D-ribose 5-phosphate from beta-D-ribopyranose: step 1/2. In terms of biological role, catalyzes the interconversion of beta-pyran and beta-furan forms of D-ribose. The chain is D-ribose pyranase from Vibrio vulnificus (strain CMCP6).